A 459-amino-acid chain; its full sequence is Trigger factor (459 aa).

Residues 166–245 (GDFANIDLTA…VNSVKAEELP (80 aa)) form the PPIase FKBP-type domain.

This sequence belongs to the FKBP-type PPIase family. Tig subfamily.

It localises to the cytoplasm. It carries out the reaction [protein]-peptidylproline (omega=180) = [protein]-peptidylproline (omega=0). Functionally, involved in protein export. Acts as a chaperone by maintaining the newly synthesized protein in an open conformation. Functions as a peptidyl-prolyl cis-trans isomerase. This Bifidobacterium longum subsp. infantis (strain ATCC 15697 / DSM 20088 / JCM 1222 / NCTC 11817 / S12) protein is Trigger factor.